We begin with the raw amino-acid sequence, 927 residues long: Probable RNA-dependent RNA polymerase 4 (927 aa).

The segment at 98 to 135 (GESPVQFPRTPGKKSCRASQAEVSLDREDPSPKFLRGD) is disordered. The span at 121–135 (SLDREDPSPKFLRGD) shows a compositional bias: basic and acidic residues.

This sequence belongs to the RdRP family.

The enzyme catalyses RNA(n) + a ribonucleoside 5'-triphosphate = RNA(n+1) + diphosphate. Probably involved in the RNA silencing pathway and required for the generation of small interfering RNAs (siRNAs). This Arabidopsis thaliana (Mouse-ear cress) protein is Probable RNA-dependent RNA polymerase 4 (RDR4).